Here is a 512-residue protein sequence, read N- to C-terminus: Ribonuclease Y (512 aa).

A helical membrane pass occupies residues Val-2–Leu-22. The region spanning Ser-202–Leu-262 is the KH domain. The 94-residue stretch at Leu-328–Ala-421 folds into the HD domain.

This sequence belongs to the RNase Y family.

The protein localises to the cell membrane. Functionally, endoribonuclease that initiates mRNA decay. This is Ribonuclease Y from Parabacteroides distasonis (strain ATCC 8503 / DSM 20701 / CIP 104284 / JCM 5825 / NCTC 11152).